A 1367-amino-acid polypeptide reads, in one-letter code: DNA-directed RNA polymerase subunit beta' (1367 aa).

Residues 1–34 (MTSTSPKSRKSSSKRKGSKKKAARSKNVIPPLSK) form a disordered region. The span at 7–24 (KSRKSSSKRKGSKKKAAR) shows a compositional bias: basic residues. Zn(2+) contacts are provided by Cys250, Cys317, Cys324, and Cys327. Positions 1306 to 1367 (SVLDDPSDAD…LQEEGLLSDE (62 aa)) are disordered. Positions 1355–1367 (LEGLQEEGLLSDE) are enriched in low complexity.

Belongs to the RNA polymerase beta' chain family. RpoC2 subfamily. In cyanobacteria the RNAP catalytic core is composed of 2 alpha, 1 beta, 1 beta', 1 gamma and 1 omega subunit. When a sigma factor is associated with the core the holoenzyme is formed, which can initiate transcription. Zn(2+) serves as cofactor.

It catalyses the reaction RNA(n) + a ribonucleoside 5'-triphosphate = RNA(n+1) + diphosphate. Functionally, DNA-dependent RNA polymerase catalyzes the transcription of DNA into RNA using the four ribonucleoside triphosphates as substrates. The polypeptide is DNA-directed RNA polymerase subunit beta' (Prochlorococcus marinus (strain SARG / CCMP1375 / SS120)).